Here is a 1627-residue protein sequence, read N- to C-terminus: Surface protein G (1627 aa).

An N-terminal signal peptide occupies residues 1–50 (MRDKKGPVNKRVDFLSNKLNKYSIRKFTVGTASILIGSLMYLGTQQEAEA). The YSIRK-G/S signaling motif signature appears at 22-33 (YSIRKFTVGTAS). The segment at 51–418 (AENNIENPTT…KGSEFTFTPE (368 aa)) is ligand binding A region, squamous nasal epithelial cell binding. Disordered regions lie at residues 74 to 143 (EVTN…VRKA), 440 to 467 (KFNP…TTPT), and 496 to 1601 (EYGP…TGLE). Composition is skewed to basic and acidic residues over residues 96–120 (DTIE…KEVA), 451–461 (KVTREGQKGEK), 505–523 (GHRD…EEVP), 554–570 (SIVE…RKFN), 579–589 (KVTREGQKGEK), 606–619 (SKGE…KDPI), 633–651 (GHRD…EEVP), 682–698 (SIVE…RKFN), 707–717 (KVTREGQKGEK), 736–747 (GEPKEEITKDPI), 761–779 (GHRD…EEVP), 810–826 (SIVE…RKFN), 835–845 (KVTREGQKGEK), 862–875 (SKGE…KDPI), 889–907 (GHRD…EEVP), 938–954 (SIVE…RKFN), 963–973 (KVTREGQKGEK), 990–1003 (SKGE…KDPI), 1017–1035 (GHRD…EEVP), 1066–1082 (SIVE…RKFN), 1091–1101 (KVTREGQKGEK), 1118–1131 (SKGE…KDPI), 1145–1163 (GHRD…EEVP), 1194–1210 (SIVE…RKFN), 1219–1229 (KVTREGQKGEK), 1246–1259 (SKGE…KDPI), 1273–1291 (GHRD…EEVP), 1322–1338 (SIVE…RKFN), 1347–1357 (KVTREGQKGEK), 1374–1387 (SKGE…KDPV), 1431–1442 (KVIEEPVDDVIK), and 1459–1478 (FETK…RVKQ). One can recognise a G5 1 domain in the interval 419–501 (APKTITELEK…NELTEYGPET (83 aa)). In terms of domain architecture, G5 2 spans 547 to 629 (YGPVKGDSIV…NELTEYGPET (83 aa)). Positions 675–757 (YGPVKGDSIV…NELTEYGPET (83 aa)) constitute a G5 3 domain. Residues 803-885 (YGPVKGDSIV…NELTEYGPET (83 aa)) enclose the G5 4 domain. In terms of domain architecture, G5 5 spans 931–1013 (YGPVKGDSIV…NELTEYGPET (83 aa)). The G5 6 domain maps to 1059–1141 (YGPVKGDSIV…NELTEYGPET (83 aa)). Residues 1187 to 1269 (YGPVKGDSIV…NELTEYGPET (83 aa)) enclose the G5 7 domain. The region spanning 1315-1397 (YGPVKGDSIV…NELTEFGGEK (83 aa)) is the G5 8 domain. One can recognise a G5 9 domain in the interval 1443 to 1525 (HGPKTGTPET…DKIVEFGGEK (83 aa)). Positions 1481–1495 (QPGSKTITTPITVNP) are enriched in polar residues. Basic and acidic residues predominate over residues 1509-1539 (EITKQPVDKIVEFGGEKPKDPKGPENPEKPS). An LPXTG sorting signal motif is present at residues 1595–1599 (LPKTG). Threonine 1598 bears the Pentaglycyl murein peptidoglycan amidated threonine mark. Residues 1599 to 1627 (GLESTQKGLIFSSIIGIAGLMLLARRRKN) constitute a propeptide, removed by sortase.

The protein resides in the secreted. Its subcellular location is the cell wall. Its function is as follows. Promotes adhesion of bacterial cells to human squamous nasal epithelial cells, a phenomenon which is likely to be important in nasal colonization. Forms short, extremely dense and thin fibrils all over the bacterial surface. Does not bind to either buccal cells or non-differentiated keratinocytes. Promotes cellular aggregation leading to biofilm formation. The protein is Surface protein G (sasG) of Staphylococcus aureus (strain NCTC 8325 / PS 47).